We begin with the raw amino-acid sequence, 129 residues long: Large ribosomal subunit protein uL22 (129 aa).

This sequence belongs to the universal ribosomal protein uL22 family. Part of the 50S ribosomal subunit.

Its function is as follows. This protein binds specifically to 23S rRNA; its binding is stimulated by other ribosomal proteins, e.g. L4, L17, and L20. It is important during the early stages of 50S assembly. It makes multiple contacts with different domains of the 23S rRNA in the assembled 50S subunit and ribosome. In terms of biological role, the globular domain of the protein is located near the polypeptide exit tunnel on the outside of the subunit, while an extended beta-hairpin is found that lines the wall of the exit tunnel in the center of the 70S ribosome. The protein is Large ribosomal subunit protein uL22 of Prochlorococcus marinus (strain MIT 9211).